We begin with the raw amino-acid sequence, 477 residues long: Salivary plasminogen activator alpha 1 (477 aa).

Residues 1–36 (MVNTMKTKLLCVLLLCGAVFSLPRQETYRQLARGSR) form the signal peptide. The region spanning 40-82 (VACKDEITQMTYRRQESWLRPEVRSKRVEHCQCDRGQARCHTV) is the Fibronectin type-I domain. Disulfide bonds link Cys-42–Cys-72, Cys-70–Cys-79, Cys-87–Cys-98, Cys-92–Cys-109, Cys-111–Cys-120, Cys-128–Cys-209, Cys-149–Cys-191, Cys-180–Cys-204, Cys-214–Cys-345, Cys-257–Cys-273, Cys-265–Cys-334, Cys-359–Cys-434, Cys-391–Cys-407, and Cys-424–Cys-452. Residues 83-121 (PVNSCSEPRCFNGGTCWQAVYFSDFVCQCPAGYTGKRCE) form the EGF-like domain. Positions 128-209 (CYEGQGVTYR…TSESCSVPVC (82 aa)) constitute a Kringle domain. N-linked (GlcNAc...) asparagine glycosylation occurs at Asn-153. The 251-residue stretch at 226-476 (STGGLFTDIT…YLGWIRDNMH (251 aa)) folds into the Peptidase S1 domain. Catalysis depends on charge relay system residues His-272 and Asp-321. Residue Asn-398 is glycosylated (N-linked (GlcNAc...) asparagine). Catalysis depends on Ser-428, which acts as the Charge relay system.

This sequence belongs to the peptidase S1 family. Monomer.

It localises to the secreted. It carries out the reaction Specific cleavage of Arg-|-Val bond in plasminogen to form plasmin.. With respect to regulation, activity toward plasminogen is stimulated in the presence of fibrin I. In terms of biological role, probably essential to support the feeding habits of this exclusively haematophagous animal. Potent thrombolytic agent. The chain is Salivary plasminogen activator alpha 1 from Desmodus rotundus (Vampire bat).